A 1095-amino-acid chain; its full sequence is Solute carrier family 12 member 1 (1095 aa).

Residues 1–173 lie on the Cytoplasmic side of the membrane; the sequence is MSVNIPSNSV…EEDVTGVVKF (173 aa). Residues 16–19 carry the RFXV motif motif; it reads RFQV. A disordered region spans residues 26 to 45; the sequence is HGSGAAMSDSTDPPHYEETS. Phosphoserine occurs at positions 57 and 87. Threonine 91, threonine 96, threonine 101, and threonine 114 each carry phosphothreonine. Phosphoserine is present on serine 116. Serine 126 carries the post-translational modification Phosphoserine; by AMPK. Residue serine 144 is modified to Phosphoserine. A helical transmembrane segment spans residues 174–194; the sequence is GWVKGVLVRCMLNIWGVMLFI. The Extracellular portion of the chain corresponds to 195-197; the sequence is RLS. A helical transmembrane segment spans residues 198–218; it reads WIVGEAGIGLGVIIIGLSVVV. Residues 219–255 are Cytoplasmic-facing; it reads TTLTGISMSAICTNGVVRGGGAYYLISRSLGPEFGGS. The chain crosses the membrane as a helical span at residues 256 to 276; it reads IGLIFRFANAVRVAMYVVGFA. Over 277–298 the chain is Extracellular; the sequence is ETVVDLLKESDSMMVDPTNDIR. A helical membrane pass occupies residues 299 to 319; the sequence is IIGSITVVILLGISVAGMEWE. Topologically, residues 320–323 are cytoplasmic; that stretch reads AKAQ. The helical transmembrane segment at 324–344 threads the bilayer; that stretch reads VILLVILLIGIANFFIGTVIP. The Extracellular segment spans residues 345 to 375; that stretch reads SNNEKKSRGFFNYQASIFAENFGPSFTEGEG. The chain crosses the membrane as a helical span at residues 376 to 396; sequence FFSVFAIFFPAATGILAGANI. At 397-413 the chain is on the cytoplasmic side; the sequence is SGDLEDPQDAIPRGTML. Residues 414-434 form a helical membrane-spanning segment; the sequence is AIFITTVAYIGVAICVRACVV. Topologically, residues 435–546 are extracellular; that stretch reads RDATGSMNDT…NNEPLRGYFL (112 aa). Residues asparagine 442 and asparagine 452 are each glycosylated (N-linked (GlcNAc...) asparagine). A run of 2 helical transmembrane segments spans residues 547–567 and 568–588; these read TFVIAMAFILIAELNVIAPII and SNFFLASYALINFSCFHASYA. Residues 589–605 are Extracellular-facing; it reads KSPGWRPAYGIYNMWVS. A helical membrane pass occupies residues 606–626; sequence LFGAILCCAVMFVINWWAAVI. Over 627–1095 the chain is Cytoplasmic; it reads TYVIELFLYI…NHKNVLTFYS (469 aa).

This sequence belongs to the SLC12A transporter family. In terms of assembly, when phosphorylated, interacts with PPP3CB. In terms of processing, phosphorylated at Ser-87, Thr-96 and Thr-101 by OXSR1/OSR1 and STK39/SPAK downstream of WNK kinases (WNK1, WNK2, WNK3 or WNK4), promoting its activity. In terms of tissue distribution, expressed predominantly in kidney (at protein level).

It is found in the apical cell membrane. The enzyme catalyses K(+)(out) + 2 chloride(out) + Na(+)(out) = K(+)(in) + 2 chloride(in) + Na(+)(in). With respect to regulation, activated following phosphorylation by OXSR1/OSR1 and STK39/SPAK downstream of WNK kinases (WNK1, WNK2, WNK3 or WNK4). Functionally, renal sodium, potassium and chloride ion cotransporter that mediates the transepithelial NaCl reabsorption in the thick ascending limb and plays an essential role in the urinary concentration and volume regulation. Electrically silent transporter system. The protein is Solute carrier family 12 member 1 (Slc12a1) of Rattus norvegicus (Rat).